Here is a 692-residue protein sequence, read N- to C-terminus: Elongation factor G (692 aa).

A tr-type G domain is found at 8 to 282 (AKTRNIGIMA…AVIAYLPSPL (275 aa)). GTP-binding positions include 17–24 (AHVDAGKT), 81–85 (DTPGH), and 135–138 (NKMD).

It belongs to the TRAFAC class translation factor GTPase superfamily. Classic translation factor GTPase family. EF-G/EF-2 subfamily.

The protein localises to the cytoplasm. Catalyzes the GTP-dependent ribosomal translocation step during translation elongation. During this step, the ribosome changes from the pre-translocational (PRE) to the post-translocational (POST) state as the newly formed A-site-bound peptidyl-tRNA and P-site-bound deacylated tRNA move to the P and E sites, respectively. Catalyzes the coordinated movement of the two tRNA molecules, the mRNA and conformational changes in the ribosome. The polypeptide is Elongation factor G (fus) (Streptococcus pyogenes serotype M1).